Consider the following 456-residue polypeptide: Non-structural protein V (456 aa).

The disordered stretch occupies residues 53–92 (SGESEQVEGGMSKDDGDVERRNLEDLSSTSPTDGTIGKRV). Positions 63–76 (MSKDDGDVERRNLE) are enriched in basic and acidic residues. Residue Ser257 is modified to Phosphoserine; by host. The segment at 265–324 (ISPEDEEPSSVGGKPNESIGRTIEGQSIRDNLQAKDNKSTDVPGAGPKDSAVKEEPPQKR) is disordered. Residue Ser350 is modified to Phosphoserine; by host. 8 residues coordinate Zn(2+): His408, Cys427, Cys431, Cys443, Cys445, Cys448, Cys452, and Cys455.

Belongs to the paramyxoviruses V protein family. As to quaternary structure, interacts with host IFIH1/MDA5, DHX58/LGP2, STAT1 and STAT2. Interacts (via N-terminus) with host UBXN1 (via C-terminal UBX domain); this interaction inhibits interferon-alpha/beta (IFN-alpha/beta) production. Interacts with host RIGI regulatory protein (via CARDs domain) and host TRIM25 (via SPRY domain); these interactions prevent TRIM25-mediated ubiquitination of RIG-I and disrupts downstream RIG-I signaling.

It localises to the host cytoplasm. In terms of biological role, plays an essential role in the inhibition of host immune response. Prevents the establishment of cellular antiviral state by blocking interferon-alpha/beta (IFN-alpha/beta) production and signaling pathway. Interacts with host IFIH1/MDA5 and DHX58/LGP2 to inhibit the transduction pathway involved in the activation of IFN-beta promoter, thus protecting the virus against cell antiviral state. Blocks the type I interferon signaling pathway by interacting with host STAT1 and STAT2 and thereby inhibiting their phosphorylation and subsequent nuclear translocation. Efficiently blocks the type II interferon signaling pathway. Suppresses interferon induction by interacting with and stabilizing host UBXN1, a negative regulator of both RIG-I-like receptors (RLR) and NF-kappa-B pathways. Blocks the type I interferon signaling pathway by disrupting the RIG-I signaling pathway. In Cynopterus brachyotis (Lesser short-nosed fruit bat), this protein is Non-structural protein V (P/V/C).